The chain runs to 908 residues: Protein translocase subunit SecA (908 aa).

ATP contacts are provided by residues Gln-87, 105 to 109, and Asp-512; that span reads GEGKT. Positions 866–908 are disordered; it reads GSDEDDAIAAHTPMIRDGDKVGRNDPCPCGSGRKYKQCHGKLS. Positions 879–888 are enriched in basic and acidic residues; it reads MIRDGDKVGR. Zn(2+) is bound by residues Cys-892, Cys-894, Cys-903, and His-904. Positions 898-908 are enriched in basic residues; it reads RKYKQCHGKLS.

The protein belongs to the SecA family. Monomer and homodimer. Part of the essential Sec protein translocation apparatus which comprises SecA, SecYEG and auxiliary proteins SecDF-YajC and YidC. Zn(2+) is required as a cofactor.

Its subcellular location is the cell inner membrane. The protein localises to the cytoplasm. The catalysed reaction is ATP + H2O + cellular proteinSide 1 = ADP + phosphate + cellular proteinSide 2.. Functionally, part of the Sec protein translocase complex. Interacts with the SecYEG preprotein conducting channel. Has a central role in coupling the hydrolysis of ATP to the transfer of proteins into and across the cell membrane, serving both as a receptor for the preprotein-SecB complex and as an ATP-driven molecular motor driving the stepwise translocation of polypeptide chains across the membrane. This chain is Protein translocase subunit SecA, found in Shewanella oneidensis (strain ATCC 700550 / JCM 31522 / CIP 106686 / LMG 19005 / NCIMB 14063 / MR-1).